A 467-amino-acid chain; its full sequence is Uronate isomerase (467 aa).

Belongs to the metallo-dependent hydrolases superfamily. Uronate isomerase family.

The enzyme catalyses D-glucuronate = D-fructuronate. It catalyses the reaction aldehydo-D-galacturonate = keto-D-tagaturonate. Its pathway is carbohydrate metabolism; pentose and glucuronate interconversion. This chain is Uronate isomerase, found in Actinobacillus succinogenes (strain ATCC 55618 / DSM 22257 / CCUG 43843 / 130Z).